Reading from the N-terminus, the 279-residue chain is Large ribosomal subunit protein uL2 (279 aa).

The segment at 222–279 is disordered; the sequence is GVAMNPVDHPHGGGEGRTSGGRHPVTPAGKPTKGAKTRVNKATDKFIIRSRHKAKKGR. The span at 269–279 shows a compositional bias: basic residues; the sequence is IRSRHKAKKGR.

The protein belongs to the universal ribosomal protein uL2 family. Part of the 50S ribosomal subunit. Forms a bridge to the 30S subunit in the 70S ribosome.

One of the primary rRNA binding proteins. Required for association of the 30S and 50S subunits to form the 70S ribosome, for tRNA binding and peptide bond formation. It has been suggested to have peptidyltransferase activity; this is somewhat controversial. Makes several contacts with the 16S rRNA in the 70S ribosome. The polypeptide is Large ribosomal subunit protein uL2 (Caulobacter vibrioides (strain ATCC 19089 / CIP 103742 / CB 15) (Caulobacter crescentus)).